The sequence spans 576 residues: Proline--tRNA ligase (576 aa).

This sequence belongs to the class-II aminoacyl-tRNA synthetase family. ProS type 1 subfamily. As to quaternary structure, homodimer.

The protein localises to the cytoplasm. The catalysed reaction is tRNA(Pro) + L-proline + ATP = L-prolyl-tRNA(Pro) + AMP + diphosphate. Its function is as follows. Catalyzes the attachment of proline to tRNA(Pro) in a two-step reaction: proline is first activated by ATP to form Pro-AMP and then transferred to the acceptor end of tRNA(Pro). As ProRS can inadvertently accommodate and process non-cognate amino acids such as alanine and cysteine, to avoid such errors it has two additional distinct editing activities against alanine. One activity is designated as 'pretransfer' editing and involves the tRNA(Pro)-independent hydrolysis of activated Ala-AMP. The other activity is designated 'posttransfer' editing and involves deacylation of mischarged Ala-tRNA(Pro). The misacylated Cys-tRNA(Pro) is not edited by ProRS. The polypeptide is Proline--tRNA ligase (Leptospira interrogans serogroup Icterohaemorrhagiae serovar Lai (strain 56601)).